A 1940-amino-acid polypeptide reads, in one-letter code: MSSDQEMAIFGEAAPYLRKSEKERIEAQNKPFDAKTSVFVAEPKESFVKGTIQSREGGKVTVKTEGGATLTVKEDQVFPMNPPKFDKIEDMAMMTHLHEPAVLYNLKERYAAWMIYTYSGLFCVTVNPYKWLPVYNPEVVTAYRGKKRQEAPPHIFSISDNAYQFMLTDRENQSILITGESGAGKTVNTKRVIQYFATIAVTGDKKKEEITSGKIQGTLEDQIISANPLLEAFGNAKTVRNDNSSRFGKFIRIHFGTTGKLASADIETYLLEKSRVTFQLKAERSYHIFYQITSNRKPELIEMLLITTNPYDYPFISQGEISVASIDDQEELIATDSAIDILGFTNEEKVSIYKLTGAVMHYGNLKFKQKQREEQAEPDGTEVADKAAYLQSLNSADLLKALCYPRVKVGNEYVTKGQTVEQVTNAVGALAKAVYEKMFLWMVARINQQLDTKQPRQYFIGVLDIAGFEIFDFNSLEQLCINFTNEKLQQFFNHHMFVLEQEEYKREGIEWTFIDFGMDLAACIELIEKPMGIFSILEEECMFPKATDMSFKNKLYDQHLGKSANFQKPKVVKGKPEAHFALIHYAGVVDYNITGWLEKNKDPLNDTVVGLYQKSALKTLAFLFSGTPTGDSEASGGTKKGGKKKGSSFQTVSALFRENLNKLMTNLRSTHPHFVRCIIPNETKTPGAMEHELVLHQLRCNGVLEGIRICRKGFPSRILYADFKQRYKVLNASAIPEGQYIDSKKASEKLLASIDIDHTQYKFGHTKVFFKAGLLGLLEEMRDEKLAQLMTRTQARCRGFLARVEYQKMVERRESIFCIQYNIRAFMNVKHWPWMKLFFRIKPLLKSAETEKEMATMKEEFQKTKDELAKSEAKRKELEEKMVTLLKEKNDLQLQVQSEAEGLADAEERCDQLIKTKIQLEAKIKEVTERAEDEEEINAELTAKKRKLEDECSELKKDIDDLELTLAKVEKEKHATENKVKNLTEEMAGLDETIAKLTKEKKALQEAHQQTLDDLQAEEDKVNTLTKAKTKLEQQVDDLEGSLEQEKKLRMDLERAKRKLEGDLKLAQESIMDIENEKQQLDEKLKKKEFEISNLQSKIEDEQALGIQLQKKIKELQARIEELEEEIEAERASRAKAEKQRSDLSRELEEISERLEEAGGATSAQIEMNKKREAEFQKMRRDLEEATLQHEATAAALRKKHADSVAELGEQIDNLQRVKQKLEKEKSEMKMEIDDLASNVETISKAKGNLEKMCRTLEDQVNELKSKEEEQQRLINDLTTQRGRLQTESGEFSRQLDEKEALVSQLSRGKQAFTQQIEELKRQLEEEIKAKNALAHGLQSARHDCDLLREQYEEEQESKAELQRALSKANTEVAQWRTKYETDAIQRTEELEEAKKKLAQRLQAAEEHVEAVNAKCASLEKTKQRLQNEVEDLMLDVERTNAACAALDKKQRNFDKILAEWKQKYEETHAELEAAQKEARSLGTELFKMKNAYEESLDQLETLKRENKNLQQEISDLTEQIAEGGKRMHELEKIKKQVEQEKSEIQAALEEAEASLEHEEGKILRIQLELNQVKSEIDRKIAEKDEEIDQLKRNHIRVVESMQTMLDAEIRSRNDAIRLKKKMEGDLNEMEIQLNHANRMAAEALKNYRNTQAILKDTQIHLDDALRGQEDLKEQLAMVERRANLLQAEIEELRATLEQTERSRKIAEQELLDASERVQLLHTQNTSLINTKKKLETDITQIQGEMEDILQEARNAEEKAKKAITDAAMMAEELKKEQDTSAHLERMKKNMEQTVKDLQNRLDEAEQLALKGGKKQIQKLEARVRELEGEVESEQKRNVEAVKGLRKHERRVKELTYQTEEDRKNILRLQDLVDKLQAKVKSYKRQAEEAEEQSNTNLSKFRKLQHELEEAEERADIAESQVNKLRVKSREVHTKIISEE.

Residues 33–82 form the Myosin N-terminal SH3-like domain; that stretch reads DAKTSVFVAEPKESFVKGTIQSREGGKVTVKTEGGATLTVKEDQVFPMNP. A phosphothreonine mark is found at threonine 64 and threonine 69. One can recognise a Myosin motor domain in the interval 86–783; it reads DKIEDMAMMT…LLGLLEEMRD (698 aa). Lysine 130 is modified (N6,N6,N6-trimethyllysine). An ATP-binding site is contributed by 179–186; sequence GESGAGKT. The residue at position 389 (tyrosine 389) is a Phosphotyrosine. Serine 392 carries the post-translational modification Phosphoserine. Threonine 419 bears the Phosphothreonine mark. Serine 625 carries the post-translational modification Phosphoserine. Residues 660–682 are actin-binding; it reads LNKLMTNLRSTHPHFVRCIIPNE. Pros-methylhistidine is present on histidine 758. The segment at 762–776 is actin-binding; sequence KFGHTKVFFKAGLLG. Residues 786-815 enclose the IQ domain; it reads LAQLMTRTQARCRGFLARVEYQKMVERRES. A coiled-coil region spans residues 844 to 1940; sequence LLKSAETEKE…EVHTKIISEE (1097 aa). Phosphoserine is present on residues serine 1093, serine 1097, serine 1163, and serine 1238. Threonine 1242 carries the post-translational modification Phosphothreonine. At serine 1244 the chain carries Phosphoserine. Residues threonine 1256 and threonine 1287 each carry the phosphothreonine modification. Residues serine 1289, serine 1293, serine 1304, and serine 1307 each carry the phosphoserine modification. Position 1465 is a phosphotyrosine (tyrosine 1465). Threonine 1468 carries the phosphothreonine modification. Position 1493 is a phosphotyrosine (tyrosine 1493). Position 1496 is a phosphoserine (serine 1496). Threonine 1502 carries the post-translational modification Phosphothreonine. Serine 1515 carries the post-translational modification Phosphoserine. Threonine 1518 bears the Phosphothreonine mark. Residues serine 1543, serine 1555, serine 1575, serine 1601, serine 1715, and serine 1727 each carry the phosphoserine modification. A phosphothreonine mark is found at threonine 1731 and threonine 1737. The segment at 1886 to 1905 is disordered; the sequence is QAEEAEEQSNTNLSKFRKLQ.

The protein belongs to the TRAFAC class myosin-kinesin ATPase superfamily. Myosin family. In terms of assembly, muscle myosin is a hexameric protein that consists of 2 heavy chain subunits (MHC), 2 alkali light chain subunits (MLC) and 2 regulatory light chain subunits (MLC-2). Interacts with GCSAM.

The protein localises to the cytoplasm. It is found in the myofibril. Its function is as follows. Myosins are actin-based motor molecules with ATPase activity essential for muscle contraction. This chain is Myosin-2 (MYH2), found in Bos taurus (Bovine).